The chain runs to 106 residues: UPF0060 membrane protein RL1530 (106 aa).

Helical transmembrane passes span 4 to 24 (IIFA…WAWL), 30 to 50 (VWWL…LTLV), 58 to 78 (TFAA…WLVE), and 86 to 106 (DIGG…APRG).

The protein belongs to the UPF0060 family.

Its subcellular location is the cell inner membrane. This Rhizobium johnstonii (strain DSM 114642 / LMG 32736 / 3841) (Rhizobium leguminosarum bv. viciae) protein is UPF0060 membrane protein RL1530.